A 232-amino-acid polypeptide reads, in one-letter code: Cilia- and flagella-associated protein 95 (232 aa).

The Extracellular segment spans residues 1-96; it reads MDSSDSSCQE…PVWISETREK (96 aa). Asn-75 is a glycosylation site (N-linked (GlcNAc...) asparagine). Residues 97-115 traverse the membrane as a helical segment; that stretch reads MAQVCLNTKLAKIKSKALL. Residues 116–232 are Cytoplasmic-facing; the sequence is NEETMNSGII…TGGPIAPFLK (117 aa). The segment at 153–163 is mn; that stretch reads LTTYAEEYAPP.

In terms of assembly, microtubule inner protein component of sperm flagellar doublet microtubules. Interacts with MYH9. Interacts with MYH10. In terms of tissue distribution, expressed in trachea multiciliated cells.

It is found in the cytoplasm. The protein localises to the cytoskeleton. The protein resides in the cilium axoneme. Its subcellular location is the flagellum axoneme. It localises to the cell membrane. Microtubule inner protein (MIP) part of the dynein-decorated doublet microtubules (DMTs) in cilia axoneme, which is required for motile cilia beating. The polypeptide is Cilia- and flagella-associated protein 95 (Bos taurus (Bovine)).